The chain runs to 300 residues: Histone deacetylase HDT3 (300 aa).

Acidic residues predominate over residues 98-112 (EDEMDLDSEDEDEEL). The segment at 98–300 (EDEMDLDSED…AHSKAKHGGK (203 aa)) is disordered. Positions 119-132 (ENGKADEKKQKSQE) are enriched in basic and acidic residues. The segment covering 151–197 (DDDSDEDETDDSDEDETDDSDEGLSPEEGDDDSSDEDDTSDDEEEDT) has biased composition (acidic residues). Residues 198–211 (PTPKKPEVGKKRAA) are compositionally biased toward basic and acidic residues. Positions 265 to 275 (SPKSAPKSGVP) are enriched in low complexity. The segment at 274–297 (VPCKSCSKSFISETAPQAHSKAKH) adopts a C2H2-type zinc-finger fold. A compositionally biased stretch (polar residues) spans 279 to 290 (CSKSFISETAPQ).

It belongs to the histone deacetylase HD2 family. As to quaternary structure, multimer. Possibly forms a homotrimer with HDT1 and/or HDT2.

The protein localises to the nucleus. The protein resides in the nucleolus. In terms of biological role, mediates the deacetylation of lysine residues on the N-terminal part of the core histones (H2A, H2B, H3 and H4). Histone deacetylation gives a tag for epigenetic repression and plays an important role in transcriptional regulation, cell cycle progression and developmental events. This is Histone deacetylase HDT3 (HDT3) from Zea mays (Maize).